Reading from the N-terminus, the 104-residue chain is Integration host factor subunit alpha (104 aa).

Residues 51 to 70 (GNFQLRDKPQRPGRNPKTGE) form a disordered region.

This sequence belongs to the bacterial histone-like protein family. In terms of assembly, heterodimer of an alpha and a beta chain.

This protein is one of the two subunits of integration host factor, a specific DNA-binding protein that functions in genetic recombination as well as in transcriptional and translational control. The polypeptide is Integration host factor subunit alpha (Ralstonia nicotianae (strain ATCC BAA-1114 / GMI1000) (Ralstonia solanacearum)).